A 165-amino-acid polypeptide reads, in one-letter code: MKKVLPVPKEFKPGDRFVAVGTLPLCEGCMLKERCEEYKRGWIYEVKGKVGLVEHDCKVHGKVVMGEVEEVGIPLILPKRLAIEGATVEYTPSKCTNKKCPHWRDCTAPWGERVKVKVREVLEEVQCPLGLPLVRVIGVPVEVKRRTRRNIKKGKGGHGKRGLAP.

This sequence belongs to the UPF0179 family.

This chain is UPF0179 protein Igni_1272, found in Ignicoccus hospitalis (strain KIN4/I / DSM 18386 / JCM 14125).